The sequence spans 159 residues: Endoribonuclease YbeY (159 aa).

Zn(2+) contacts are provided by histidine 125, histidine 129, and histidine 135.

Belongs to the endoribonuclease YbeY family. Requires Zn(2+) as cofactor.

The protein localises to the cytoplasm. Single strand-specific metallo-endoribonuclease involved in late-stage 70S ribosome quality control and in maturation of the 3' terminus of the 16S rRNA. This is Endoribonuclease YbeY from Thermoanaerobacter pseudethanolicus (strain ATCC 33223 / 39E) (Clostridium thermohydrosulfuricum).